The primary structure comprises 122 residues: Large ribosomal subunit protein uL14 (122 aa).

The protein belongs to the universal ribosomal protein uL14 family. Part of the 50S ribosomal subunit. Forms a cluster with proteins L3 and L19. In the 70S ribosome, L14 and L19 interact and together make contacts with the 16S rRNA in bridges B5 and B8.

Binds to 23S rRNA. Forms part of two intersubunit bridges in the 70S ribosome. The polypeptide is Large ribosomal subunit protein uL14 (Magnetococcus marinus (strain ATCC BAA-1437 / JCM 17883 / MC-1)).